The following is a 738-amino-acid chain: Ethylene receptor 1 (738 aa).

The next 3 helical transmembrane spans lie at 23–43, 53–73, and 92–112; these read ISDF…IYFV, WVLV…LINL, and VLTA…IPDL. Residues C65 and H69 each contribute to the Cu cation site. The GAF domain occupies 158–307; the sequence is DRHTILKTTL…VVADQVAVAL (150 aa). The 236-residue stretch at 350–585 folds into the Histidine kinase domain; it reads VMNHEMRTPM…IFDVKLGISE (236 aa). A Phosphohistidine; by autocatalysis modification is found at H353. Residues 470 to 473, D513, K529, S544, and L548 contribute to the ADP site; that span reads NAVK. The region spanning 611–729 is the Response regulatory domain; that stretch reads KVLVMDENGV…NIRDVLSDLL (119 aa). D659 carries the post-translational modification 4-aspartylphosphate. K714 participates in a covalent cross-link: Glycyl lysine isopeptide (Lys-Gly) (interchain with G-Cter in ubiquitin).

This sequence belongs to the ethylene receptor family. As to quaternary structure, homodimer; disulfide-linked. Heteromer with ERS1, ERS2, ETR2 and EIN4. Interacts with AHP1, AHP2 and AHP3. Interacts with RTE1. Interacts with EIN2. It depends on Cu cation as a cofactor. In terms of processing, autophosphorylated. Phosphorylation at His-353 modulates the interaction with EIN2. Leaves, roots, stems, seedlings, flowers, anthers, carpels and ovules.

Its subcellular location is the endoplasmic reticulum membrane. The catalysed reaction is ATP + protein L-histidine = ADP + protein N-phospho-L-histidine.. In terms of biological role, ethylene receptor related to bacterial two-component regulators. Acts as a redundant negative regulator of ethylene signaling. In the presence of ethylene, the auto-kinase activity of ETR1 is inhibited and the non-phosphorylated kinase domain binds tightly to the corresponding domain of EIN2. The sequence is that of Ethylene receptor 1 from Arabidopsis thaliana (Mouse-ear cress).